The primary structure comprises 184 residues: Probable RNA 2'-phosphotransferase (184 aa).

This sequence belongs to the KptA/TPT1 family.

Its function is as follows. Removes the 2'-phosphate from RNA via an intermediate in which the phosphate is ADP-ribosylated by NAD followed by a presumed transesterification to release the RNA and generate ADP-ribose 1''-2''-cyclic phosphate (APPR&gt;P). May function as an ADP-ribosylase. The polypeptide is Probable RNA 2'-phosphotransferase (Escherichia coli O139:H28 (strain E24377A / ETEC)).